The primary structure comprises 145 residues: uncharacterized protein (145 aa).

Residues 97 to 117 (ISMLLLIVIIAIGLTISYMVI) traverse the membrane as a helical segment.

The protein resides in the membrane. This is an uncharacterized protein from Methanocaldococcus jannaschii (strain ATCC 43067 / DSM 2661 / JAL-1 / JCM 10045 / NBRC 100440) (Methanococcus jannaschii).